A 365-amino-acid chain; its full sequence is Cytosolic 5'-nucleotidase 1A (365 aa).

The segment covering 1 to 11 (MEPGQPREARE) has biased composition (basic and acidic residues). Residues 1–23 (MEPGQPREAREPGPGAETAAVPR) are disordered. Aspartate 208 serves as the catalytic Nucleophile.

It belongs to the 5'-nucleotidase type 3 family. It depends on Mg(2+) as a cofactor.

Its subcellular location is the cytoplasm. The catalysed reaction is a ribonucleoside 5'-phosphate + H2O = a ribonucleoside + phosphate. The enzyme catalyses a 2'-deoxyribonucleoside 5'-phosphate + H2O = a 2'-deoxyribonucleoside + phosphate. It catalyses the reaction IMP + H2O = inosine + phosphate. It carries out the reaction AMP + H2O = adenosine + phosphate. The catalysed reaction is dCMP + H2O = 2'-deoxycytidine + phosphate. Activated by ADP. In terms of biological role, catalyzes the hydrolysis of ribonucleotide and deoxyribonucleotide monophosphates, releasing inorganic phosphate and the corresponding nucleoside. AMP is the major substrate but can also hydrolyze dCMP and IMP. The protein is Cytosolic 5'-nucleotidase 1A (Nt5c1a) of Mus musculus (Mouse).